Consider the following 370-residue polypeptide: Probable G-protein coupled receptor 85 (370 aa).

Topologically, residues 1-25 (MANYSHAADNILQNLSPLTAFLKLT) are extracellular. The N-linked (GlcNAc...) asparagine glycan is linked to Asn-3. The helical transmembrane segment at 26-46 (SLGFIIGVSVVGNLLISILLA) threads the bilayer. Residues 47 to 57 (KDKTLHRAPYY) lie on the Cytoplasmic side of the membrane. A helical transmembrane segment spans residues 58 to 78 (FLLDLCCSDILRSAICFPFVF). At 79 to 96 (NSVKNGSTWTYGTLTCKV) the chain is on the extracellular side. Asn-83 is a glycosylation site (N-linked (GlcNAc...) asparagine). The cysteines at positions 94 and 172 are disulfide-linked. Residues 97-117 (IAFLGVLSCFHTAFMLFCISV) traverse the membrane as a helical segment. At 118–137 (TRYLAIAHHRFYTKRLTFWT) the chain is on the cytoplasmic side. A helical membrane pass occupies residues 138–158 (CLAVICMVWTLSVAMAFPPVL). Residues 159-188 (DVGTYSFIREEDQCTFQHRSFRANDSLGFM) lie on the Extracellular side of the membrane. An N-linked (GlcNAc...) asparagine glycan is attached at Asn-182. A helical transmembrane segment spans residues 189 to 209 (LLLALILLATQLVYLKLIFFV). The Cytoplasmic portion of the chain corresponds to 210-286 (HDRRKMKPVQ…FKMEKRISRM (77 aa)). A helical membrane pass occupies residues 287–307 (FYIMTFLFLTLWGPYLVACYW). Residues 308-313 (RVFARG) lie on the Extracellular side of the membrane. A helical membrane pass occupies residues 314-334 (PVVPGGFLTAAVWMSFAQAGI). At 335 to 370 (NPFVCIFSNRELRRCFSTTLLYCRKSRLPREPYCVI) the chain is on the cytoplasmic side.

Belongs to the G-protein coupled receptor 1 family. Interacts with DLG4 and DLG3.

The protein localises to the cell membrane. It is found in the endoplasmic reticulum. Orphan receptor. The sequence is that of Probable G-protein coupled receptor 85 (GPR85) from Pongo abelii (Sumatran orangutan).